A 231-amino-acid polypeptide reads, in one-letter code: Ion-translocating oxidoreductase complex subunit E (231 aa).

Helical transmembrane passes span 18-38 (GLVQLLGLCPLLAVTATVTNA), 39-59 (LGLGFATLLVLVGSNMLVSLV), 69-89 (IPVFVMIIAALVTSVQLLINA), 93-113 (GLYLSLGIFLPLIVTNCVIIG), 128-148 (AFDGLMMGIGFTCVLVVLGAG), and 182-202 (PFLLALLPPGAFIGMGLLIAG).

It belongs to the NqrDE/RnfAE family. The complex is composed of six subunits: RnfA, RnfB, RnfC, RnfD, RnfE and RnfG.

The protein localises to the cell inner membrane. In terms of biological role, part of a membrane-bound complex that couples electron transfer with translocation of ions across the membrane. This is Ion-translocating oxidoreductase complex subunit E from Shewanella denitrificans (strain OS217 / ATCC BAA-1090 / DSM 15013).